A 133-amino-acid chain; its full sequence is Putative pre-16S rRNA nuclease (133 aa).

Belongs to the YqgF nuclease family.

Its subcellular location is the cytoplasm. Functionally, could be a nuclease involved in processing of the 5'-end of pre-16S rRNA. In Dehalococcoides mccartyi (strain ATCC BAA-2266 / KCTC 15142 / 195) (Dehalococcoides ethenogenes (strain 195)), this protein is Putative pre-16S rRNA nuclease.